Reading from the N-terminus, the 349-residue chain is Phenylalanine--tRNA ligase alpha subunit (349 aa).

Glu258 is a Mg(2+) binding site.

The protein belongs to the class-II aminoacyl-tRNA synthetase family. Phe-tRNA synthetase alpha subunit type 1 subfamily. As to quaternary structure, tetramer of two alpha and two beta subunits. Mg(2+) serves as cofactor.

The protein localises to the cytoplasm. The catalysed reaction is tRNA(Phe) + L-phenylalanine + ATP = L-phenylalanyl-tRNA(Phe) + AMP + diphosphate + H(+). The chain is Phenylalanine--tRNA ligase alpha subunit from Rickettsia felis (strain ATCC VR-1525 / URRWXCal2) (Rickettsia azadi).